We begin with the raw amino-acid sequence, 427 residues long: MNRNEILFDRAKAIIPGGVNSPVRAFGSVGGVPRFIKKAEGAYVWDENGTRYTDYVGSWGPAIVGHAHPEVIEAMREAALGGLSFGAPTEGEIVIAEEIAKIMPSVERLRLVSSGTEATMTAIRLARGFTGRDKIIKFEGCYHGHSDSLLVKAGSGLLTFGNPSSAGVPADFTKHTLVLEYNNIAQLEEAFAQSGNDIACVILEPFVGNMNLVRPSEAFVKALRELTEKHGAVLIYDEVMTGFRVALGGAQSLHGITPDLTTMGKVIGGGMPLAAFGGRKDIMECISPLGGVYQAGTLSGNPIAVAAGLKTLEIIRREGFYENLTARTEQLVQGFRTAADAAGIEFTADSVGGMFGLYFAAHAPRNYADMARSNIDAFKRFFHGMLDRGIAFGPSAYEAGFVSAAHTPELIDETVAVAVEVFKAMAA.

Lysine 265 carries the N6-(pyridoxal phosphate)lysine modification.

This sequence belongs to the class-III pyridoxal-phosphate-dependent aminotransferase family. HemL subfamily. As to quaternary structure, homodimer. It depends on pyridoxal 5'-phosphate as a cofactor.

It is found in the cytoplasm. It catalyses the reaction (S)-4-amino-5-oxopentanoate = 5-aminolevulinate. It participates in porphyrin-containing compound metabolism; protoporphyrin-IX biosynthesis; 5-aminolevulinate from L-glutamyl-tRNA(Glu): step 2/2. This Neisseria meningitidis serogroup C / serotype 2a (strain ATCC 700532 / DSM 15464 / FAM18) protein is Glutamate-1-semialdehyde 2,1-aminomutase.